Consider the following 261-residue polypeptide: MQFAVIGHPIAHSLSPMLHETWLKAAGLFGCYTTLDVEGDGLEAFVQKVRKRQFDGINVTIPHKSAIIPFLDRLEPAAARAGAVNTVYWDGEELVGANTDGTGFARALATWTNAKNSLVIGAGGAARGIIPMLPGHVTVMNRTNQTAEQVAAEFGQSAVPWSRTLDLTPYDVIINTTSVGMAPAIDQTPIELTATTALICDIIYRPTPTRLLREATANGLDTLDGVLMFVLQAAEAFERFTGHKPDIALGEQVIRKQLEES.

Shikimate is bound by residues 13-15 (SLS) and threonine 60. Catalysis depends on lysine 64, which acts as the Proton acceptor. Positions 85 and 100 each coordinate shikimate. NADP(+)-binding positions include 121–125 (GAGGA) and isoleucine 202. Tyrosine 204 serves as a coordination point for shikimate. Glycine 225 contributes to the NADP(+) binding site.

The protein belongs to the shikimate dehydrogenase family. As to quaternary structure, homodimer.

The catalysed reaction is shikimate + NADP(+) = 3-dehydroshikimate + NADPH + H(+). Its pathway is metabolic intermediate biosynthesis; chorismate biosynthesis; chorismate from D-erythrose 4-phosphate and phosphoenolpyruvate: step 4/7. Functionally, involved in the biosynthesis of the chorismate, which leads to the biosynthesis of aromatic amino acids. Catalyzes the reversible NADPH linked reduction of 3-dehydroshikimate (DHSA) to yield shikimate (SA). The sequence is that of Shikimate dehydrogenase (NADP(+)) from Exiguobacterium sibiricum (strain DSM 17290 / CCUG 55495 / CIP 109462 / JCM 13490 / 255-15).